Consider the following 459-residue polypeptide: ATP synthase subunit beta (459 aa).

149–156 (GGAGVGKT) provides a ligand contact to ATP.

Belongs to the ATPase alpha/beta chains family. In terms of assembly, F-type ATPases have 2 components, CF(1) - the catalytic core - and CF(0) - the membrane proton channel. CF(1) has five subunits: alpha(3), beta(3), gamma(1), delta(1), epsilon(1). CF(0) has three main subunits: a(1), b(2) and c(9-12). The alpha and beta chains form an alternating ring which encloses part of the gamma chain. CF(1) is attached to CF(0) by a central stalk formed by the gamma and epsilon chains, while a peripheral stalk is formed by the delta and b chains.

The protein localises to the cell inner membrane. The catalysed reaction is ATP + H2O + 4 H(+)(in) = ADP + phosphate + 5 H(+)(out). In terms of biological role, produces ATP from ADP in the presence of a proton gradient across the membrane. The catalytic sites are hosted primarily by the beta subunits. In Pseudomonas savastanoi pv. phaseolicola (strain 1448A / Race 6) (Pseudomonas syringae pv. phaseolicola (strain 1448A / Race 6)), this protein is ATP synthase subunit beta.